The chain runs to 928 residues: Nitrogen network kinase 1 (928 aa).

Over residues 1 to 12 (MFTSQRQLRQNG) the composition is skewed to polar residues. 2 disordered regions span residues 1-43 (MFTS…SYGR) and 81-118 (HEHP…LELG). The span at 13-29 (SPMSSSRSSQHSSGTAS) shows a compositional bias: low complexity. Polar residues-rich tracts occupy residues 30-40 (PISDSPASNRS) and 86-107 (RSTL…SQVN). S178 and S179 each carry phosphoserine. Residues 374-394 (ANDDNINSRNTPNNSNDTYVN) are disordered. Residues 375 to 391 (NDDNINSRNTPNNSNDT) are compositionally biased toward low complexity. Phosphoserine occurs at positions 405 and 426. The Protein kinase domain maps to 449–912 (HRLGKIIGFG…WKLKRIEEVL (464 aa)). ATP contacts are provided by residues 455-463 (IGFGAWGII) and K478. D580 (proton acceptor) is an active-site residue. Disordered stretches follow at residues 670 to 741 (ENRK…KYIG) and 767 to 813 (YDSP…SGSS). Positions 683–696 (VSSSSHSLKHLNQP) are enriched in polar residues. At S737 the chain carries Phosphoserine. Phosphotyrosine is present on Y739. The segment covering 769–813 (SPDSSQSEISAASSSSSNLSSLSSSTKASAVTNSGVTTSSPSGSS) has biased composition (low complexity).

Belongs to the protein kinase superfamily. Ser/Thr protein kinase family. In terms of assembly, interacts with URE2 and GDH2. Also interacts with the TORC1 kinase complex.

Its subcellular location is the cytoplasm. The enzyme catalyses L-seryl-[protein] + ATP = O-phospho-L-seryl-[protein] + ADP + H(+). It catalyses the reaction L-threonyl-[protein] + ATP = O-phospho-L-threonyl-[protein] + ADP + H(+). Serine/threonine-protein kinase involved in the phosphorylation of the NAD(+)-dependent glutamate dehydrogenase GDH2. When overexpressed, confers hypersensitivity to rapamycin and induces rapid nuclear accumulation of GLN3 to activate the transcription of nitrogen-regulated genes. The chain is Nitrogen network kinase 1 (NNK1) from Saccharomyces cerevisiae (strain ATCC 204508 / S288c) (Baker's yeast).